We begin with the raw amino-acid sequence, 555 residues long: 2-succinyl-5-enolpyruvyl-6-hydroxy-3-cyclohexene-1-carboxylate synthase (555 aa).

This sequence belongs to the TPP enzyme family. MenD subfamily. Homodimer. The cofactor is Mg(2+). Requires Mn(2+) as cofactor. Thiamine diphosphate serves as cofactor.

It catalyses the reaction isochorismate + 2-oxoglutarate + H(+) = 5-enolpyruvoyl-6-hydroxy-2-succinyl-cyclohex-3-ene-1-carboxylate + CO2. It participates in quinol/quinone metabolism; 1,4-dihydroxy-2-naphthoate biosynthesis; 1,4-dihydroxy-2-naphthoate from chorismate: step 2/7. It functions in the pathway quinol/quinone metabolism; menaquinone biosynthesis. Catalyzes the thiamine diphosphate-dependent decarboxylation of 2-oxoglutarate and the subsequent addition of the resulting succinic semialdehyde-thiamine pyrophosphate anion to isochorismate to yield 2-succinyl-5-enolpyruvyl-6-hydroxy-3-cyclohexene-1-carboxylate (SEPHCHC). In Bacteroides thetaiotaomicron (strain ATCC 29148 / DSM 2079 / JCM 5827 / CCUG 10774 / NCTC 10582 / VPI-5482 / E50), this protein is 2-succinyl-5-enolpyruvyl-6-hydroxy-3-cyclohexene-1-carboxylate synthase.